We begin with the raw amino-acid sequence, 217 residues long: MKIAIPITDENFDEVLLKARNADILEFRVDSFTNKDISFVSGLLKKAKENGFETILTIRSEKEGGAYVENRVEMFEKLMPLSDYTDIELSSTDIIAYISRLSKEYNKKLIVSYHNFEMTPANFVIKETIREALRYGDIPKIALKANSYEDVARLMCSAIDIKTPKILISMGEFGKISRIAGFIFGSFISYAYLEKPNAPGQLSLEEMLKLKEMFYLR.

3-dehydroquinate contacts are provided by residues 26–28 (EFR) and R59. H114 serves as the catalytic Proton donor/acceptor. The active-site Schiff-base intermediate with substrate is the K140. The 3-dehydroquinate site is built by R178 and Q201.

This sequence belongs to the type-I 3-dehydroquinase family. In terms of assembly, homodimer.

The enzyme catalyses 3-dehydroquinate = 3-dehydroshikimate + H2O. It participates in metabolic intermediate biosynthesis; chorismate biosynthesis; chorismate from D-erythrose 4-phosphate and phosphoenolpyruvate: step 3/7. Involved in the third step of the chorismate pathway, which leads to the biosynthesis of aromatic amino acids. Catalyzes the cis-dehydration of 3-dehydroquinate (DHQ) and introduces the first double bond of the aromatic ring to yield 3-dehydroshikimate. The polypeptide is 3-dehydroquinate dehydratase (Hydrogenobaculum sp. (strain Y04AAS1)).